Consider the following 464-residue polypeptide: Trigger factor (464 aa).

Positions 166 to 245 (GDFLTIDITA…VKAVKERELP (80 aa)) constitute a PPIase FKBP-type domain. Positions 426–464 (FVRPGGEEEAPAAEVTEADTAEGEATEVPAEDEKAEAKA) are disordered. Over residues 432–455 (EEEAPAAEVTEADTAEGEATEVPA) the composition is skewed to acidic residues.

It belongs to the FKBP-type PPIase family. Tig subfamily.

The protein localises to the cytoplasm. The catalysed reaction is [protein]-peptidylproline (omega=180) = [protein]-peptidylproline (omega=0). Functionally, involved in protein export. Acts as a chaperone by maintaining the newly synthesized protein in an open conformation. Functions as a peptidyl-prolyl cis-trans isomerase. The protein is Trigger factor of Pseudarthrobacter chlorophenolicus (strain ATCC 700700 / DSM 12829 / CIP 107037 / JCM 12360 / KCTC 9906 / NCIMB 13794 / A6) (Arthrobacter chlorophenolicus).